The chain runs to 288 residues: Pyridoxal kinase PdxY (288 aa).

Substrate is bound by residues S12 and 47-48 (TQ). ATP-binding positions include D114, E151, K184, and 211–214 (RPLL). A substrate-binding site is contributed by D225.

This sequence belongs to the pyridoxine kinase family. PdxY subfamily. Homodimer. Mg(2+) serves as cofactor.

It carries out the reaction pyridoxal + ATP = pyridoxal 5'-phosphate + ADP + H(+). Its pathway is cofactor metabolism; pyridoxal 5'-phosphate salvage; pyridoxal 5'-phosphate from pyridoxal: step 1/1. Functionally, pyridoxal kinase involved in the salvage pathway of pyridoxal 5'-phosphate (PLP). Catalyzes the phosphorylation of pyridoxal to PLP. This chain is Pyridoxal kinase PdxY, found in Pseudomonas paraeruginosa (strain DSM 24068 / PA7) (Pseudomonas aeruginosa (strain PA7)).